The sequence spans 445 residues: Glutamate-1-semialdehyde 2,1-aminomutase (445 aa).

K263 is subject to N6-(pyridoxal phosphate)lysine.

Belongs to the class-III pyridoxal-phosphate-dependent aminotransferase family. HemL subfamily. It depends on pyridoxal 5'-phosphate as a cofactor.

It localises to the cytoplasm. It catalyses the reaction (S)-4-amino-5-oxopentanoate = 5-aminolevulinate. It participates in porphyrin-containing compound metabolism; protoporphyrin-IX biosynthesis; 5-aminolevulinate from L-glutamyl-tRNA(Glu): step 2/2. This chain is Glutamate-1-semialdehyde 2,1-aminomutase, found in Halorubrum lacusprofundi (strain ATCC 49239 / DSM 5036 / JCM 8891 / ACAM 34).